An 83-amino-acid polypeptide reads, in one-letter code: Cytochrome c5 (83 aa).

C15, C18, H19, and M59 together coordinate heme c. A disulfide bridge links C65 with C68.

Belongs to the cytochrome c family. As to quaternary structure, homodimer. In terms of processing, binds 1 heme c group covalently per subunit.

In terms of biological role, it is unreactive with cytochrome c reductase or oxidase. This chain is Cytochrome c5, found in Azotobacter vinelandii.